A 620-amino-acid polypeptide reads, in one-letter code: Ferric/cupric reductase transmembrane component 7 (620 aa).

The Extracellular segment spans residues 1-45; the sequence is MIEERDLVLSNGIHCIADIHSELYARLKKESQAATPWVYQKQYGK. A helical transmembrane segment spans residues 46–66; that stretch reads FVTYFVAVIIFLSLIKKLAFM. Topologically, residues 67 to 107 are cytoplasmic; sequence YYDSSEEFLPEKKNSPTTPSVFLARIMTKLVAFNRYICYRK. A helical membrane pass occupies residues 108 to 128; the sequence is FPTLIFSYLGIPTSVGTFLVV. The Extracellular segment spans residues 129–167; the sequence is MATTLYTLLYCFVPHPFYRPCAGFGSPPLSVRAGIMAIS. Positions 161 to 320 constitute a Ferric oxidoreductase domain; it reads AGIMAISLVP…LAVKGYLRPG (160 aa). A helical transmembrane segment spans residues 168–188; sequence LVPFVFSLSGKINVIGWLVGL. The Cytoplasmic portion of the chain corresponds to 189 to 194; it reads SYEKIN. Residues 195–215 traverse the membrane as a helical segment; it reads IYHQWASILCLFFSWVHVIPF. Residues H197 and H211 each coordinate heme. The Extracellular segment spans residues 216–237; it reads LRQARHEGGYERMHQRWKASDM. Residues 238–258 form a helical membrane-spanning segment; the sequence is WRSGVPPILFLNLLWLSSLPI. The Cytoplasmic segment spans residues 259–265; that stretch reads ARRHFYE. Residues 266-286 form a helical membrane-spanning segment; the sequence is IFLQLHWILAVGFYISLFYHV. Heme-binding residues include H271 and H285. At 287-292 the chain is on the extracellular side; sequence YPELNS. Residues 293 to 313 traverse the membrane as a helical segment; sequence HMYLVATIVVWFAQLFYRLAV. The Cytoplasmic segment spans residues 314 to 620; that stretch reads KGYLRPGRSF…CYLHSESFGY (307 aa). The region spanning 321–419 is the FAD-binding FR-type domain; sequence RSFMASTIAN…DGPYGGIERD (99 aa). 369–375 is an FAD binding site; sequence HPFSIFP. 411 to 414 serves as a coordination point for NADP(+); that stretch reads GPYG. Positions 519-543 are disordered; it reads SDQSDLAKREKDTEFGQDDTESNST. The span at 523–532 shows a compositional bias: basic and acidic residues; that stretch reads DLAKREKDTE. 578-579 is an NADP(+) binding site; that stretch reads CF.

This sequence belongs to the ferric reductase (FRE) family. It depends on FAD as a cofactor.

Its subcellular location is the cell membrane. It catalyses the reaction 2 a Fe(II)-siderophore + NADP(+) + H(+) = 2 a Fe(III)-siderophore + NADPH. In terms of biological role, cell surface metalloreductase. May be involved in copper homeostasis. This Saccharomyces cerevisiae (strain ATCC 204508 / S288c) (Baker's yeast) protein is Ferric/cupric reductase transmembrane component 7 (FRE7).